Consider the following 101-residue polypeptide: Small ribosomal subunit protein uS14 (101 aa).

Belongs to the universal ribosomal protein uS14 family. As to quaternary structure, part of the 30S ribosomal subunit. Contacts proteins S3 and S10.

In terms of biological role, binds 16S rRNA, required for the assembly of 30S particles and may also be responsible for determining the conformation of the 16S rRNA at the A site. The sequence is that of Small ribosomal subunit protein uS14 from Ehrlichia canis (strain Jake).